The chain runs to 101 residues: Guanyl-specific ribonuclease Po1 (101 aa).

At Gln1 the chain carries Pyrrolidone carboxylic acid. Cystine bridges form between Cys7-Cys84, Cys9-Cys99, and Cys48-Cys82. The active site involves His36. Glu54 serves as the catalytic Proton acceptor. His87 (proton donor) is an active-site residue.

Belongs to the ribonuclease N1/T1 family.

It carries out the reaction [RNA] containing guanosine + H2O = an [RNA fragment]-3'-guanosine-3'-phosphate + a 5'-hydroxy-ribonucleotide-3'-[RNA fragment].. Inhibited by divalent cations. Inhibition decreases in the order zinc, lead, cadmium, nickel, mercury. This Pleurotus ostreatus (Oyster mushroom) protein is Guanyl-specific ribonuclease Po1.